A 186-amino-acid chain; its full sequence is dCTP deaminase (186 aa).

Residue 107–112 (KSTYAR) participates in dCTP binding. The active-site Proton donor/acceptor is the Glu133. 3 residues coordinate dCTP: Gln152, Tyr166, and Gln176.

The protein belongs to the dCTP deaminase family. As to quaternary structure, homotrimer.

The enzyme catalyses dCTP + H2O + H(+) = dUTP + NH4(+). It functions in the pathway pyrimidine metabolism; dUMP biosynthesis; dUMP from dCTP (dUTP route): step 1/2. Its function is as follows. Catalyzes the deamination of dCTP to dUTP. This chain is dCTP deaminase, found in Campylobacter fetus subsp. fetus (strain 82-40).